Reading from the N-terminus, the 343-residue chain is Aspartate carbamoyltransferase catalytic subunit (343 aa).

Residues R91 and T92 each contribute to the carbamoyl phosphate site. Residue K119 participates in L-aspartate binding. Positions 141, 171, and 174 each coordinate carbamoyl phosphate. R204 and R259 together coordinate L-aspartate. Carbamoyl phosphate contacts are provided by G300 and P301.

The protein belongs to the aspartate/ornithine carbamoyltransferase superfamily. ATCase family. As to quaternary structure, heterododecamer (2C3:3R2) of six catalytic PyrB chains organized as two trimers (C3), and six regulatory PyrI chains organized as three dimers (R2).

It carries out the reaction carbamoyl phosphate + L-aspartate = N-carbamoyl-L-aspartate + phosphate + H(+). The protein operates within pyrimidine metabolism; UMP biosynthesis via de novo pathway; (S)-dihydroorotate from bicarbonate: step 2/3. Its function is as follows. Catalyzes the condensation of carbamoyl phosphate and aspartate to form carbamoyl aspartate and inorganic phosphate, the committed step in the de novo pyrimidine nucleotide biosynthesis pathway. In Burkholderia thailandensis (strain ATCC 700388 / DSM 13276 / CCUG 48851 / CIP 106301 / E264), this protein is Aspartate carbamoyltransferase catalytic subunit.